Reading from the N-terminus, the 295-residue chain is 4-hydroxybenzoate octaprenyltransferase (295 aa).

The next 8 helical transmembrane spans lie at 28 to 48 (AGWL…AGGF), 51 to 71 (WHLL…GCCV), 101 to 121 (ALGV…TTNA), 124 to 144 (IAWS…KRFV), 159 to 179 (IPMA…WLVL), 220 to 240 (VMAF…PFGL), 242 to 262 (WPLH…WRLI), and 274 to 294 (FTGN…GFAL).

This sequence belongs to the UbiA prenyltransferase family. It depends on Mg(2+) as a cofactor.

The protein localises to the cell inner membrane. The catalysed reaction is all-trans-octaprenyl diphosphate + 4-hydroxybenzoate = 4-hydroxy-3-(all-trans-octaprenyl)benzoate + diphosphate. Its pathway is cofactor biosynthesis; ubiquinone biosynthesis. Its function is as follows. Catalyzes the prenylation of para-hydroxybenzoate (PHB) with an all-trans polyprenyl group. Mediates the second step in the final reaction sequence of ubiquinone-8 (UQ-8) biosynthesis, which is the condensation of the polyisoprenoid side chain with PHB, generating the first membrane-bound Q intermediate 3-octaprenyl-4-hydroxybenzoate. In Paracidovorax citrulli (strain AAC00-1) (Acidovorax citrulli), this protein is 4-hydroxybenzoate octaprenyltransferase.